A 567-amino-acid polypeptide reads, in one-letter code: ETHYLENE INSENSITIVE 3-like 3 protein (567 aa).

The stretch at 24-44 (NVAEIDVSDEEIDADDLERRM) forms a coiled coil. 2 disordered regions span residues 55–81 (KERQ…AQRK) and 286–393 (IQQP…RNIL). A compositionally biased stretch (basic and acidic residues) spans 69-79 (ETPKKISDQAQ). The DNA-binding element occupies 162–288 (SQFVLQDLQD…LNQEESLIQQ (127 aa)). The span at 286 to 299 (IQQPSSDNGNSNVT) shows a compositional bias: polar residues. The segment covering 300–312 (ETHRRGNNADRRK) has biased composition (basic and acidic residues). A compositionally biased stretch (basic residues) spans 363–372 (KHRRRKRPRI).

This sequence belongs to the EIN3 family. As to quaternary structure, interacts with MYB72.

Its subcellular location is the nucleus. In terms of biological role, probable transcription factor that may be involved in the ethylene response pathway. This is ETHYLENE INSENSITIVE 3-like 3 protein (EIL3) from Arabidopsis thaliana (Mouse-ear cress).